A 453-amino-acid polypeptide reads, in one-letter code: uncharacterized protein (453 aa).

Positions 1 to 23 are cleaved as a signal peptide; sequence MFLLQRFFIYGLFLACFYTTVFG. At 24–137 the chain is on the lumenal side; the sequence is EKHFEAEEYR…EKQFSYSSGT (114 aa). A helical transmembrane segment spans residues 138–158; sequence NGILATFLTAIPPNIFILLVP. Residues 159 to 165 lie on the Cytoplasmic side of the membrane; that stretch reads KSFDTSM. A helical membrane pass occupies residues 166-186; that stretch reads LNLFVAVSAGSLLGDVFLQLL. Residues 187 to 194 are Lumenal-facing; the sequence is PTVYSTNG. Residues 195–215 form a helical membrane-spanning segment; it reads GDFPASSVYSILIGALVFFLM. The Cytoplasmic segment spans residues 216-358; the sequence is DKGIRILIHE…LRNGYTKSQV (143 aa). The segment covering 229–238 has biased composition (basic and acidic residues); that stretch reads SLSKPKKDGE. Residues 229-278 form a disordered region; that stretch reads SLSKPKKDGEETSSVNKPSASSTQTDVKGVEGLRKRNVKDDQNSKGHEPD. Positions 240 to 254 are enriched in polar residues; that stretch reads TSSVNKPSASSTQTD. Positions 256 to 278 are enriched in basic and acidic residues; sequence KGVEGLRKRNVKDDQNSKGHEPD. A helical membrane pass occupies residues 359 to 379; sequence LVLQMITMVTGLLGAIVATYI. The Lumenal segment spans residues 380–399; the sequence is YTASSSSSPYGSFLLQLEDK. The chain crosses the membrane as a helical span at residues 400–420; it reads LLPFTAGGFLYIAYLGVFPEL. The Cytoplasmic portion of the chain corresponds to 421-432; it reads LEINLSKGKLGN. The chain crosses the membrane as a helical span at residues 433–453; that stretch reads MIYTALYMMFIVGGFSFLYYV.

The protein belongs to the ZIP transporter (TC 2.A.5) family. KE4/Catsup subfamily.

The protein resides in the endoplasmic reticulum membrane. This is an uncharacterized protein from Schizosaccharomyces pombe (strain 972 / ATCC 24843) (Fission yeast).